Here is a 234-residue protein sequence, read N- to C-terminus: Probable transcriptional regulatory protein TcrX (234 aa).

A Response regulatory domain is found at 10 to 124; it reads TVLVVDDEPV…EVVLRLRALL (115 aa). Asp-59 is subject to 4-aspartylphosphate. The ompR/PhoB-type DNA-binding region spans 135–232; it reads GAQLVVGDLV…LRGAGYVLKP (98 aa).

In terms of processing, phosphorylated by TcrY.

It localises to the cytoplasm. Its function is as follows. Member of the two-component regulatory system TcrY/TcrX. In Mycobacterium tuberculosis (strain ATCC 25618 / H37Rv), this protein is Probable transcriptional regulatory protein TcrX (tcrX).